Reading from the N-terminus, the 156-residue chain is FUN14 domain-containing protein 1 (156 aa).

The YXXL motif lies at 19–22 (YEVL). 3 consecutive transmembrane segments (helical) span residues 49–69 (YSVA…GFLF), 76–96 (AATA…SGYV), and 135–155 (FIKQ…LGLA).

Belongs to the FUN14 family.

The protein localises to the mitochondrion outer membrane. Acts as an activator of hypoxia-induced mitophagy, an important mechanism for mitochondrial quality control. The protein is FUN14 domain-containing protein 1 (FUNDC1) of Gallus gallus (Chicken).